The following is a 327-amino-acid chain: Biotin synthase (327 aa).

Positions 48-278 constitute a Radical SAM core domain; that stretch reads YCGDGVGLCM…DRHITVCGGR (231 aa). [4Fe-4S] cluster-binding residues include cysteine 66, cysteine 70, and cysteine 73. Residues serine 143 and cysteine 203 each contribute to the [2Fe-2S] cluster site.

It belongs to the radical SAM superfamily. Biotin synthase family. Homodimer. [4Fe-4S] cluster is required as a cofactor. The cofactor is [2Fe-2S] cluster.

The catalysed reaction is (4R,5S)-dethiobiotin + (sulfur carrier)-SH + 2 reduced [2Fe-2S]-[ferredoxin] + 2 S-adenosyl-L-methionine = (sulfur carrier)-H + biotin + 2 5'-deoxyadenosine + 2 L-methionine + 2 oxidized [2Fe-2S]-[ferredoxin]. It participates in cofactor biosynthesis; biotin biosynthesis; biotin from 7,8-diaminononanoate: step 2/2. Catalyzes the conversion of dethiobiotin (DTB) to biotin by the insertion of a sulfur atom into dethiobiotin via a radical-based mechanism. The polypeptide is Biotin synthase (Syntrophotalea carbinolica (strain DSM 2380 / NBRC 103641 / GraBd1) (Pelobacter carbinolicus)).